The sequence spans 365 residues: Heat-inducible transcription repressor HrcA (365 aa).

Belongs to the HrcA family.

Its function is as follows. Negative regulator of class I heat shock genes (grpE-dnaK-dnaJ and groELS operons). Prevents heat-shock induction of these operons. In Nodularia spumigena, this protein is Heat-inducible transcription repressor HrcA.